Reading from the N-terminus, the 214-residue chain is Holliday junction branch migration complex subunit RuvA (214 aa).

Positions 1–63 (MIASLSGTVE…EDALTLYGFA (63 aa)) are domain I. The tract at residues 64 to 142 (DRDEREVFEV…PTGEPVPGAE (79 aa)) is domain II. Positions 143–151 (AEASDEPAV) are flexible linker. The segment at 151 to 214 (VETVWHADVV…GMAGAVRGGR (64 aa)) is domain III.

It belongs to the RuvA family. In terms of assembly, homotetramer. Forms an RuvA(8)-RuvB(12)-Holliday junction (HJ) complex. HJ DNA is sandwiched between 2 RuvA tetramers; dsDNA enters through RuvA and exits via RuvB. An RuvB hexamer assembles on each DNA strand where it exits the tetramer. Each RuvB hexamer is contacted by two RuvA subunits (via domain III) on 2 adjacent RuvB subunits; this complex drives branch migration. In the full resolvosome a probable DNA-RuvA(4)-RuvB(12)-RuvC(2) complex forms which resolves the HJ.

Its subcellular location is the cytoplasm. The RuvA-RuvB-RuvC complex processes Holliday junction (HJ) DNA during genetic recombination and DNA repair, while the RuvA-RuvB complex plays an important role in the rescue of blocked DNA replication forks via replication fork reversal (RFR). RuvA specifically binds to HJ cruciform DNA, conferring on it an open structure. The RuvB hexamer acts as an ATP-dependent pump, pulling dsDNA into and through the RuvAB complex. HJ branch migration allows RuvC to scan DNA until it finds its consensus sequence, where it cleaves and resolves the cruciform DNA. This is Holliday junction branch migration complex subunit RuvA from Micrococcus luteus (strain ATCC 4698 / DSM 20030 / JCM 1464 / CCM 169 / CCUG 5858 / IAM 1056 / NBRC 3333 / NCIMB 9278 / NCTC 2665 / VKM Ac-2230) (Micrococcus lysodeikticus).